The chain runs to 88 residues: Small ribosomal subunit protein bS16c (88 aa).

It belongs to the bacterial ribosomal protein bS16 family.

The protein resides in the plastid. It localises to the chloroplast. The sequence is that of Small ribosomal subunit protein bS16c from Jasminum nudiflorum (Winter jasmine).